Reading from the N-terminus, the 238-residue chain is IkB-like protein (238 aa).

4 ANK repeats span residues 48 to 77, 86 to 115, 123 to 152, and 157 to 187; these read GSSV…PGEI, DGNS…KNGT, NGMT…DPTQ, and RGFT…PLYM. The short motif at 80–86 is the Nuclear localization signal element; that stretch reads PHRRDKD. A Nuclear localization signal motif is present at residues 202 to 213; it reads KKKPKIIITGCK. The PxIxITxC motif; Interaction with host PPP3CA motif lies at 205–212; the sequence is PKIIITGC. Positions 227-230 match the FLCV motif motif; the sequence is FLCV.

The protein belongs to the asfivirus A238L family. In terms of assembly, interacts with host PPIA. Interacts with host PPP3CA/Calcineurin. Interacts with host RELA/p65; interaction of the 32 kDa form with host RELA results in the formation of a stable complex with NF-kappa-B. Interacts with host PPP3R1. Interacts with host EP300; this interaction inhibits the association of host EP300 with host RELA, JUN and NFATC2. The protein exists in a 28 kDa and a 32 kDa form, probably due to post-translational modifications which are neither phosphorylation, nor sumoylation.

It is found in the host nucleus. The protein resides in the host cytoplasm. Functionally, I-kappa-B- (IkB)-like protein that inhibits the binding of NF-kappa-B to DNA, thereby down-regulating pro-inflammatory cytokine production. Forms a heterodimer with the NF-kappa-B subunit RELA/p65 and prevents the activation of the NF-kappa-B transcription factor. Also inhibits the host calcineurin phosphatase activity, which is required for the induction of nuclear factor of activated T cells(NFAT)-dependent immune response genes. Inhibits calcineurin function, which is required for the induction of nuclear factor of activated T cells (NFAT)-dependent immune response genes. Prevents the binding of substrates to calcineurin without affecting the phosphatase activity. Does not contain the serine residues that are phosphorylated by host IkB kinase and thus is not degraded following stimulation of the NFkB pathway. This is IkB-like protein (A238L) from African swine fever virus (strain Badajoz 1971 Vero-adapted) (Ba71V).